The chain runs to 72 residues: Lantibiotic Flvbeta.g (72 aa).

Positions 1 to 34 (MNNNNFDMEKFKKLAAIVSEGEIDEMLDETTVGA) are cleaved as a propeptide — cleaved by FlvT. The lanthionine (Ser-Cys); by FlvM2 cross-link spans 36–40 (STLPC). 3 positions are modified to 2,3-didehydrobutyrine; by FlvM2: Thr-37, Thr-46, and Thr-48. Cross-links (beta-methyllanthionine (Thr-Cys); by FlvM2) lie at residues 55–61 (TTGFDWC), 63–66 (TGAC), and 67–70 (THSC).

In terms of processing, contains LL-lanthionine and DL-beta-methyllanthionine, when coepressed in E.coli with the flavecin synthetase FlvM2.

The protein localises to the secreted. Functionally, lanthionine-containing peptide antibiotic (lantibiotic) that is probably weakly active on Gram-positive bacteria, since its analog [Del1]Flvbeta.g shows weak antibacterial activity against M.luteus. This activity is synergistically enhanced by [Del2]Flvalpha.a, an analog of Flvalpha.a, which is encoded by the same operon than Flvbeta.g. The bactericidal activity of lantibiotics is based on depolarization of energized bacterial cytoplasmic membranes, initiated by the formation of aqueous transmembrane pores. This Ruminococcus flavefaciens protein is Lantibiotic Flvbeta.g.